A 136-amino-acid polypeptide reads, in one-letter code: Large ribosomal subunit protein uL22 (136 aa).

Belongs to the universal ribosomal protein uL22 family. In terms of assembly, part of the 50S ribosomal subunit.

Functionally, this protein binds specifically to 23S rRNA; its binding is stimulated by other ribosomal proteins, e.g. L4, L17, and L20. It is important during the early stages of 50S assembly. It makes multiple contacts with different domains of the 23S rRNA in the assembled 50S subunit and ribosome. In terms of biological role, the globular domain of the protein is located near the polypeptide exit tunnel on the outside of the subunit, while an extended beta-hairpin is found that lines the wall of the exit tunnel in the center of the 70S ribosome. The polypeptide is Large ribosomal subunit protein uL22 (Bacteroides fragilis (strain YCH46)).